The chain runs to 322 residues: Undecaprenyl-phosphate 4-deoxy-4-formamido-L-arabinose transferase (322 aa).

Residues 1-235 are Cytoplasmic-facing; it reads MFEIHPVKKV…TCLTTTPLRM (235 aa). Residues 236-256 traverse the membrane as a helical segment; sequence LSLLGSIIAIGGFSIAVLLVI. Topologically, residues 257–269 are periplasmic; it reads LRLTFGPQWAAEG. A helical transmembrane segment spans residues 270–290; sequence VFMLFAVLFTFIGAQFIGMGL. At 291-322 the chain is on the cytoplasmic side; that stretch reads LGEYIGRIYTDVRARPRYFVQQVIRPSSKENE.

The protein belongs to the glycosyltransferase 2 family.

It is found in the cell inner membrane. The catalysed reaction is UDP-4-deoxy-4-formamido-beta-L-arabinose + di-trans,octa-cis-undecaprenyl phosphate = 4-deoxy-4-formamido-alpha-L-arabinopyranosyl di-trans,octa-cis-undecaprenyl phosphate + UDP. The protein operates within glycolipid biosynthesis; 4-amino-4-deoxy-alpha-L-arabinose undecaprenyl phosphate biosynthesis; 4-amino-4-deoxy-alpha-L-arabinose undecaprenyl phosphate from UDP-4-deoxy-4-formamido-beta-L-arabinose and undecaprenyl phosphate: step 1/2. Its pathway is bacterial outer membrane biogenesis; lipopolysaccharide biosynthesis. In terms of biological role, catalyzes the transfer of 4-deoxy-4-formamido-L-arabinose from UDP to undecaprenyl phosphate. The modified arabinose is attached to lipid A and is required for resistance to polymyxin and cationic antimicrobial peptides. This Escherichia coli O45:K1 (strain S88 / ExPEC) protein is Undecaprenyl-phosphate 4-deoxy-4-formamido-L-arabinose transferase.